A 440-amino-acid chain; its full sequence is Probable exopolygalacturonase C (440 aa).

Residues 1-21 (MLITNPALLGILASLAPLALG) form the signal peptide. Asn24, Asn84, Asn151, and Asn219 each carry an N-linked (GlcNAc...) asparagine glycan. PbH1 repeat units follow at residues 217–238 (GTNI…AVNT) and 240–261 (SHNI…SIGS). Asp231 (proton donor) is an active-site residue. Residue His255 is part of the active site. N-linked (GlcNAc...) asparagine glycosylation occurs at Asn271. One copy of the PbH1 3 repeat lies at 272–293 (ITNLRFEDVTVIDALYAARFKS). Asn313 and Asn350 each carry an N-linked (GlcNAc...) asparagine glycan. The cysteines at positions 389 and 395 are disulfide-linked. An N-linked (GlcNAc...) asparagine glycan is attached at Asn434.

The protein belongs to the glycosyl hydrolase 28 family.

It localises to the secreted. The enzyme catalyses [(1-&gt;4)-alpha-D-galacturonosyl](n) + H2O = alpha-D-galacturonate + [(1-&gt;4)-alpha-D-galacturonosyl](n-1). Specific in hydrolyzing the terminal glycosidic bond of polygalacturonic acid and oligogalacturonates. The chain is Probable exopolygalacturonase C (pgxC) from Neosartorya fischeri (strain ATCC 1020 / DSM 3700 / CBS 544.65 / FGSC A1164 / JCM 1740 / NRRL 181 / WB 181) (Aspergillus fischerianus).